A 279-amino-acid chain; its full sequence is Ribosomal RNA small subunit methyltransferase J (279 aa).

S-adenosyl-L-methionine contacts are provided by residues 138-139 (ER) and Asp-194.

The protein belongs to the methyltransferase superfamily. RsmJ family.

The protein resides in the cytoplasm. The catalysed reaction is guanosine(1516) in 16S rRNA + S-adenosyl-L-methionine = N(2)-methylguanosine(1516) in 16S rRNA + S-adenosyl-L-homocysteine + H(+). Functionally, specifically methylates the guanosine in position 1516 of 16S rRNA. This Acinetobacter baumannii (strain ACICU) protein is Ribosomal RNA small subunit methyltransferase J.